The following is a 325-amino-acid chain: Protease HtpX homolog (325 aa).

The helical transmembrane segment at 20-40 (IGYLLGGGGGMMIALVIAVAM) threads the bilayer. Histidine 130 serves as a coordination point for Zn(2+). Residue glutamate 131 is part of the active site. Histidine 134 lines the Zn(2+) pocket. The next 2 membrane-spanning stretches (helical) occupy residues 145–165 (IVAT…FLGG) and 173–193 (VMGV…AMIV). Glutamate 202 contacts Zn(2+). A disordered region spans residues 286-325 (SAAMTARAAAPSQNSGPWGQRSDNAGGNSNGGSRYRGPWS). The segment covering 306 to 325 (RSDNAGGNSNGGSRYRGPWS) has biased composition (low complexity).

It belongs to the peptidase M48B family. The cofactor is Zn(2+).

It is found in the cell inner membrane. The chain is Protease HtpX homolog from Brucella melitensis biotype 2 (strain ATCC 23457).